Consider the following 201-residue polypeptide: Large ribosomal subunit protein uL4 (201 aa).

A disordered region spans residues 42 to 67 (GNSAQKTRSEVSGGGKKPWNQKGTGR).

It belongs to the universal ribosomal protein uL4 family. In terms of assembly, part of the 50S ribosomal subunit.

Functionally, one of the primary rRNA binding proteins, this protein initially binds near the 5'-end of the 23S rRNA. It is important during the early stages of 50S assembly. It makes multiple contacts with different domains of the 23S rRNA in the assembled 50S subunit and ribosome. In terms of biological role, forms part of the polypeptide exit tunnel. The polypeptide is Large ribosomal subunit protein uL4 (Legionella pneumophila (strain Corby)).